Consider the following 228-residue polypeptide: ATP-dependent dethiobiotin synthetase BioD (228 aa).

Position 12 to 17 (12 to 17 (EIGKTT)) interacts with ATP. Threonine 16 is a Mg(2+) binding site. Lysine 37 is an active-site residue. Serine 41 contributes to the substrate binding site. Residues aspartate 54, 116–119 (EGAG), and 205–207 (PRL) each bind ATP. The Mg(2+) site is built by aspartate 54 and glutamate 116.

It belongs to the dethiobiotin synthetase family. Homodimer. Mg(2+) is required as a cofactor.

It localises to the cytoplasm. The catalysed reaction is (7R,8S)-7,8-diammoniononanoate + CO2 + ATP = (4R,5S)-dethiobiotin + ADP + phosphate + 3 H(+). Its pathway is cofactor biosynthesis; biotin biosynthesis; biotin from 7,8-diaminononanoate: step 1/2. In terms of biological role, catalyzes a mechanistically unusual reaction, the ATP-dependent insertion of CO2 between the N7 and N8 nitrogen atoms of 7,8-diaminopelargonic acid (DAPA, also called 7,8-diammoniononanoate) to form a ureido ring. This Pseudomonas aeruginosa (strain UCBPP-PA14) protein is ATP-dependent dethiobiotin synthetase BioD.